Here is a 1448-residue protein sequence, read N- to C-terminus: Protein clueless (1448 aa).

Disordered stretches follow at residues 1–96 (MALE…HAEK), 110–129 (NANV…ADGD), and 265–286 (RTRP…VSDP). 2 stretches are compositionally biased toward low complexity: residues 9-26 (NSNA…TKAS) and 41-66 (NLNP…ADGP). The segment covering 68–77 (AKKKGKKNRN) has biased composition (basic residues). Polar residues predominate over residues 78–88 (KSPTEPTTEAV). Serine 270 carries the post-translational modification Phosphoserine. A Clu domain is found at 424-666 (RAEDAFSSKL…RTFPPDVNFL (243 aa)). Disordered stretches follow at residues 726–773 (SEKS…SGEA), 958–1010 (AVSS…SASD), and 1414–1448 (GEAE…ATSS). Positions 748–769 (GAEKPDDKEKKNEEEEKKERST) are enriched in basic and acidic residues. A compositionally biased stretch (basic residues) spans 966-981 (KKRGNGGKHNKHKSSK). Residues 986 to 1007 (QQQQQTTGNQNGSSSGSSNSSS) are compositionally biased toward low complexity. Basic and acidic residues predominate over residues 1419-1429 (AVSKDIKEQPE).

This sequence belongs to the CLU family.

It is found in the cytoplasm. Its function is as follows. mRNA-binding protein involved in proper cytoplasmic distribution of mitochondria. The chain is Protein clueless from Drosophila melanogaster (Fruit fly).